Reading from the N-terminus, the 260-residue chain is Small ribosomal subunit protein uS3 (260 aa).

One can recognise a KH type-2 domain in the interval 39-114 (LRQYIEQKLG…QIRINVVEVQ (76 aa)). The interval 217 to 260 (GQEPDPLPPASRDRERDPRDRDREPRRRQQQRRRQQFEDRSNEG) is disordered. Composition is skewed to basic and acidic residues over residues 227–243 (SRDRERDPRDRDREPRR) and 251–260 (QQFEDRSNEG).

The protein belongs to the universal ribosomal protein uS3 family. As to quaternary structure, part of the 30S ribosomal subunit. Forms a tight complex with proteins S10 and S14.

Functionally, binds the lower part of the 30S subunit head. Binds mRNA in the 70S ribosome, positioning it for translation. The sequence is that of Small ribosomal subunit protein uS3 from Nostoc punctiforme (strain ATCC 29133 / PCC 73102).